The chain runs to 99 residues: Cobalt transport protein CbiN (99 aa).

2 helical membrane passes run 6 to 26 (VLMI…YSGL) and 68 to 88 (SLLF…FFGY).

The protein belongs to the CbiN family. In terms of assembly, forms an energy-coupling factor (ECF) transporter complex composed of an ATP-binding protein (A component, CbiO), a transmembrane protein (T component, CbiQ) and 2 possible substrate-capture proteins (S components, CbiM and CbiN) of unknown stoichimetry.

Its subcellular location is the cell membrane. It functions in the pathway cofactor biosynthesis; adenosylcobalamin biosynthesis. Functionally, part of the energy-coupling factor (ECF) transporter complex CbiMNOQ involved in cobalt import. This chain is Cobalt transport protein CbiN, found in Methanococcus vannielii (strain ATCC 35089 / DSM 1224 / JCM 13029 / OCM 148 / SB).